The following is a 99-amino-acid chain: MKIPVLPAVVLLSLLVLHSAQGATLGGPEEESTIENYASRPEAFNTPFLNIDKLRSAFKADEFLNWHALFESIKRKLPFLNWDAFPKLKGLRSATPDAQ.

The N-terminal stretch at 1–22 (MKIPVLPAVVLLSLLVLHSAQG) is a signal peptide.

Highly expressed in skin and detected at lower levels in thymus. In skin, found exclusively in lamellar granules of granular keratinocytes and in the intracellular space of the stratum corneum. Also highly expressed in oral mucosa, tongue, esophagus, and stomach, and at much lower levels in bladder and uterus. Not detected in gastrointestinal mucosa.

It localises to the secreted. In terms of biological role, may act as a soluble regulator of keratinocyte differentiation. May play an important role in embryonic skin morphogenesis. The protein is Keratinocyte differentiation-associated protein (KRTDAP) of Homo sapiens (Human).